Consider the following 556-residue polypeptide: Thermosome subunit beta (556 aa).

Residues 530 to 556 form a disordered region; that stretch reads LSTDKGDDDGGAGGMGGGMGGGMGGMM. The segment covering 540–556 has biased composition (gly residues); sequence GAGGMGGGMGGGMGGMM.

Belongs to the TCP-1 chaperonin family. In terms of assembly, forms an oligomeric complex of eight-membered rings.

Its function is as follows. Molecular chaperone; binds unfolded polypeptides in vitro, and has a weak ATPase activity. This chain is Thermosome subunit beta (thsB), found in Halobacterium salinarum (strain ATCC 700922 / JCM 11081 / NRC-1) (Halobacterium halobium).